A 128-amino-acid polypeptide reads, in one-letter code: Large ribosomal subunit protein bL17 (128 aa).

It belongs to the bacterial ribosomal protein bL17 family. As to quaternary structure, part of the 50S ribosomal subunit. Contacts protein L32.

This Enterobacter sp. (strain 638) protein is Large ribosomal subunit protein bL17.